Here is a 421-residue protein sequence, read N- to C-terminus: MTESVLDYMSRLGRDARAASRLLARAATAQKNRALLAAADALDAARAELSLANEQDLAAGRANGLEPAMLDRLALTPARIDDMIEGLRQVATLPDPIGEIRDMRYVPSGIQIGKMRVPLGVVGIIYESRPNVTIDAASLCLKSGNATILRGGSEAIHSNQAIARCIQQGLAEAGLPAAAVQVVETTDRAAVGALISMPEYVDVIVPRGGKGLIERISREAKVPVIKHLDGICHVYIDVAADLDKAIRVADNAKTQRYAPCNTMETLLVHAGIAERVLPPLATIYREKGVELRGDAATRALLGADVLEATEEDWRTEYNAPILSIRIVDGLDAAIEHINTYGSQHTDAIITENFSDARRFLAEVDSASVMVNASTRFADGFEYGLGAEIGISTDKLHARGPVGLEGLTSEKYVVFGDGHVRT.

Belongs to the gamma-glutamyl phosphate reductase family.

It localises to the cytoplasm. It catalyses the reaction L-glutamate 5-semialdehyde + phosphate + NADP(+) = L-glutamyl 5-phosphate + NADPH + H(+). The protein operates within amino-acid biosynthesis; L-proline biosynthesis; L-glutamate 5-semialdehyde from L-glutamate: step 2/2. Catalyzes the NADPH-dependent reduction of L-glutamate 5-phosphate into L-glutamate 5-semialdehyde and phosphate. The product spontaneously undergoes cyclization to form 1-pyrroline-5-carboxylate. The protein is Gamma-glutamyl phosphate reductase of Pseudomonas aeruginosa (strain LESB58).